The following is a 296-amino-acid chain: Protein FAM110A (296 aa).

Disordered stretches follow at residues 61–97 (NTRQ…PCSG) and 117–192 (PVSP…KSDL). Pro residues-rich tracts occupy residues 139-148 (PATPPRPPPS) and 161-170 (PASPARPYPS).

The protein belongs to the FAM110 family. As to quaternary structure, may interact with CSPP1.

Its subcellular location is the cytoplasm. It is found in the cytoskeleton. The protein localises to the microtubule organizing center. The protein resides in the centrosome. It localises to the spindle pole. In Mus musculus (Mouse), this protein is Protein FAM110A (Fam110a).